The primary structure comprises 87 residues: Small ribosomal subunit protein bS18B (87 aa).

This sequence belongs to the bacterial ribosomal protein bS18 family. In terms of assembly, part of the 30S ribosomal subunit. Forms a tight heterodimer with protein bS6.

Binds as a heterodimer with protein bS6 to the central domain of the 16S rRNA, where it helps stabilize the platform of the 30S subunit. In Mycobacterium marinum (strain ATCC BAA-535 / M), this protein is Small ribosomal subunit protein bS18B.